Reading from the N-terminus, the 292-residue chain is MRKPIFTGAGVAIITPFTENGVNYDKLGELIEFQIREGIDSIIICGTTGEASTMPDEEHKAVIKYTVEKVNKRVPVIAGTGSNDTIHAVELSKYAEEVGADAILSVTPYYNKTTQKGLYEHFKLIAESIKIPVVLYNVPGRTGLNIEPKTVKQLAEIENIVAIKECNINQVGEIISICPPDFTVYSGNDDMVVPLLALGGKGVISVMANIIPKKTHELVATFLDGNVEESRKIQLSLLNLIKALFIEVSPIPVKAAMNLMGMEVGKCRLPLTDMTEKNFEILKQTLKDYGLI.

Thr-48 lines the pyruvate pocket. Tyr-136 acts as the Proton donor/acceptor in catalysis. Lys-164 acts as the Schiff-base intermediate with substrate in catalysis. Residue Ile-204 coordinates pyruvate.

It belongs to the DapA family. Homotetramer; dimer of dimers.

The protein resides in the cytoplasm. The enzyme catalyses L-aspartate 4-semialdehyde + pyruvate = (2S,4S)-4-hydroxy-2,3,4,5-tetrahydrodipicolinate + H2O + H(+). It functions in the pathway amino-acid biosynthesis; L-lysine biosynthesis via DAP pathway; (S)-tetrahydrodipicolinate from L-aspartate: step 3/4. Functionally, catalyzes the condensation of (S)-aspartate-beta-semialdehyde [(S)-ASA] and pyruvate to 4-hydroxy-tetrahydrodipicolinate (HTPA). This Acetivibrio thermocellus (strain ATCC 27405 / DSM 1237 / JCM 9322 / NBRC 103400 / NCIMB 10682 / NRRL B-4536 / VPI 7372) (Clostridium thermocellum) protein is 4-hydroxy-tetrahydrodipicolinate synthase.